The chain runs to 401 residues: tRNA pseudouridine synthase Pus10 (401 aa).

Residues 64–195 enclose the THUMP domain; that stretch reads ALAKSGHRES…DGSVSVEVMP (132 aa).

This sequence belongs to the pseudouridine synthase Pus10 family.

It catalyses the reaction uridine(54) in tRNA = pseudouridine(54) in tRNA. It carries out the reaction uridine(55) in tRNA = pseudouridine(55) in tRNA. Responsible for synthesis of pseudouridine from uracil-54 and uracil-55 in the psi GC loop of transfer RNAs. In Caldivirga maquilingensis (strain ATCC 700844 / DSM 13496 / JCM 10307 / IC-167), this protein is tRNA pseudouridine synthase Pus10.